The following is a 524-amino-acid chain: Na(+)/H(+) antiporter NhaB (524 aa).

9 consecutive transmembrane segments (helical) span residues 13-33 (FLGN…IINP), 98-118 (LLLV…LFVF), 140-160 (AFLS…SVSV), 239-259 (FFIR…LVCL), 304-324 (AIIG…VGLV), 325-345 (GLSV…HSLG), 358-378 (LTVF…TPII), 448-468 (ATPN…APLI), and 479-499 (ALPY…FLLV).

The protein belongs to the NhaB Na(+)/H(+) (TC 2.A.34) antiporter family.

It is found in the cell inner membrane. It catalyses the reaction 2 Na(+)(in) + 3 H(+)(out) = 2 Na(+)(out) + 3 H(+)(in). Its function is as follows. Na(+)/H(+) antiporter that extrudes sodium in exchange for external protons. The polypeptide is Na(+)/H(+) antiporter NhaB (Yersinia pseudotuberculosis serotype I (strain IP32953)).